Consider the following 452-residue polypeptide: Phosphoglucosamine mutase (452 aa).

The active-site Phosphoserine intermediate is Ser108. Ser108, Asp247, Asp249, and Asp251 together coordinate Mg(2+). At Ser108 the chain carries Phosphoserine.

The protein belongs to the phosphohexose mutase family. Mg(2+) serves as cofactor. Post-translationally, activated by phosphorylation.

It catalyses the reaction alpha-D-glucosamine 1-phosphate = D-glucosamine 6-phosphate. Catalyzes the conversion of glucosamine-6-phosphate to glucosamine-1-phosphate. This chain is Phosphoglucosamine mutase, found in Paraburkholderia phytofirmans (strain DSM 17436 / LMG 22146 / PsJN) (Burkholderia phytofirmans).